Here is a 352-residue protein sequence, read N- to C-terminus: MNGTEGPFFYIPMVNTTGVVRSPYEYPQYYLVNPAAYACLGAYMFFLILVGFPVNFLTLYVTLEHKKLRTPLNYILLNLAVADLFMVFGGFTTTIYTSMHGYFVLGRLGCNIEGFFATLGGEIALWSLVVLAIERWVVVCKPISNFRFGENHAIMGVAFTWFMASACAVPPLVGWSRYIPEGMQCSCGIDYYTRAEGFNNESFVIYMFTVHFCIPLAVVGFCYGRLLCAVKEAAAAQQESETTQRAEREVSRMVVIMVIGFLVCWLPYASVAWYIFTHQGSEFGPLFMTIPAFFAKSSSIYNPMIYICMNKQFRHCMITTLCCGKNPFEEEEGASTTKTEASSVSSSSVSPA.

At Met-1–Ala-36 the chain is on the extracellular side. Residues Asn-2 and Asn-15 are each glycosylated (N-linked (GlcNAc...) asparagine). A helical membrane pass occupies residues Tyr-37–Val-61. Residues Thr-62–Asn-73 are Cytoplasmic-facing. The chain crosses the membrane as a helical span at residues Tyr-74 to Tyr-96. The Extracellular portion of the chain corresponds to Thr-97–Cys-110. Cysteines 110 and 187 form a disulfide. A helical transmembrane segment spans residues Asn-111 to Ile-133. Positions Glu-134–Trp-136 match the 'Ionic lock' involved in activated form stabilization motif. The Cytoplasmic portion of the chain corresponds to Glu-134–His-152. Residues Ala-153 to Val-173 form a helical membrane-spanning segment. Over Gly-174–Ser-202 the chain is Extracellular. N-linked (GlcNAc...) asparagine glycosylation occurs at Asn-200. The chain crosses the membrane as a helical span at residues Phe-203–Gly-224. The Cytoplasmic portion of the chain corresponds to Arg-225 to Arg-252. A helical membrane pass occupies residues Met-253 to Tyr-274. The Extracellular portion of the chain corresponds to Ile-275–Leu-286. The chain crosses the membrane as a helical span at residues Phe-287–Cys-308. N6-(retinylidene)lysine is present on Lys-296. At Met-309–Ala-352 the chain is on the cytoplasmic side. Residues Cys-322 and Cys-323 are each lipidated (S-palmitoyl cysteine). Positions Glu-331–Ala-352 are disordered. Low complexity predominate over residues Ser-342–Ala-352.

It belongs to the G-protein coupled receptor 1 family. Opsin subfamily. Phosphorylated on some or all of the serine and threonine residues present in the C-terminal region. Post-translationally, contains one covalently linked retinal chromophore.

The protein localises to the membrane. The protein resides in the cell projection. It localises to the cilium. It is found in the photoreceptor outer segment. Photoreceptor required for image-forming vision at low light intensity. While most salt water fish species use retinal as chromophore, most freshwater fish use 3-dehydroretinal, or a mixture of retinal and 3-dehydroretinal. Light-induced isomerization of 11-cis to all-trans retinal triggers a conformational change that activates signaling via G-proteins. Subsequent receptor phosphorylation mediates displacement of the bound G-protein alpha subunit by arrestin and terminates signaling. The polypeptide is Rhodopsin (rho) (Gobius niger (Black goby)).